We begin with the raw amino-acid sequence, 503 residues long: Aromatase (503 aa).

2 helical membrane passes run 19–39 (EVMP…FFVW) and 51–71 (GYCM…MGLG). Positions 294 to 324 (ENVNQCILEMMIAAPDTLSVTVFFMLCLIAQ) are substrate-binding pocket. Substrate is bound by residues Asp-309 and Met-374. Cys-437 is a heme binding site.

It belongs to the cytochrome P450 family. Requires heme as cofactor. As to expression, expressed in placenta. Highly expressed in follicles (0 hour:hCG), followed by a drop (12-24 hour:hCG) and by an increase (30-39 hour:hCG). Highly expressed in corpora lutea. Also expressed in granulosa cell layer. Not expressed in theca interna.

It is found in the endoplasmic reticulum membrane. The protein resides in the microsome membrane. The enzyme catalyses testosterone + 3 reduced [NADPH--hemoprotein reductase] + 3 O2 = 17beta-estradiol + formate + 3 oxidized [NADPH--hemoprotein reductase] + 4 H2O + 4 H(+). The catalysed reaction is androst-4-ene-3,17-dione + 3 reduced [NADPH--hemoprotein reductase] + 3 O2 = estrone + formate + 3 oxidized [NADPH--hemoprotein reductase] + 4 H2O + 4 H(+). It catalyses the reaction androst-4-ene-3,17-dione + reduced [NADPH--hemoprotein reductase] + O2 = 19-hydroxyandrost-4-ene-3,17-dione + oxidized [NADPH--hemoprotein reductase] + H2O + H(+). It carries out the reaction 19-hydroxyandrost-4-ene-3,17-dione + reduced [NADPH--hemoprotein reductase] + O2 = 19-oxo-androst-4-ene-3,17-dione + oxidized [NADPH--hemoprotein reductase] + 2 H2O + H(+). The enzyme catalyses 19-oxo-androst-4-ene-3,17-dione + reduced [NADPH--hemoprotein reductase] + O2 = estrone + formate + oxidized [NADPH--hemoprotein reductase] + H2O + 2 H(+). The catalysed reaction is estrone + reduced [NADPH--hemoprotein reductase] + O2 = 2-hydroxyestrone + oxidized [NADPH--hemoprotein reductase] + H2O + H(+). It catalyses the reaction 17beta-hydroxy-5alpha-androstan-3-one + reduced [NADPH--hemoprotein reductase] + O2 = 17beta,19-dihydroxy-3-oxo-5alpha-androstanone + oxidized [NADPH--hemoprotein reductase] + H2O + H(+). It carries out the reaction 17beta,19-dihydroxy-3-oxo-5alpha-androstanone + reduced [NADPH--hemoprotein reductase] + O2 = 17beta-hydroxy-3,19-dioxo-5alpha-androstanone + oxidized [NADPH--hemoprotein reductase] + 2 H2O + H(+). The enzyme catalyses 17beta-hydroxy-3,19-dioxo-5alpha-androstanone + reduced [NADPH--hemoprotein reductase] + O2 = 17beta-hydroxy-3-oxo-19-nor-5alpha-androst-1-ene + formate + oxidized [NADPH--hemoprotein reductase] + H2O + 2 H(+). The protein operates within steroid hormone biosynthesis. Functionally, a cytochrome P450 monooxygenase that catalyzes the conversion of C19 androgens, androst-4-ene-3,17-dione (androstenedione) and testosterone to the C18 estrogens, estrone and estradiol, respectively. Catalyzes three successive oxidations of C19 androgens: two conventional oxidations at C19 yielding 19-hydroxy and 19-oxo/19-aldehyde derivatives, followed by a third oxidative aromatization step that involves C1-beta hydrogen abstraction combined with cleavage of the C10-C19 bond to yield a phenolic A ring and formic acid. Alternatively, the third oxidative reaction yields a 19-norsteroid and formic acid. Converts dihydrotestosterone to delta1,10-dehydro 19-nordihydrotestosterone and may play a role in homeostasis of this potent androgen. Also displays 2-hydroxylase activity toward estrone. Mechanistically, uses molecular oxygen inserting one oxygen atom into a substrate, and reducing the second into a water molecule, with two electrons provided by NADPH via cytochrome P450 reductase (CPR; NADPH-ferrihemoprotein reductase). The protein is Aromatase (CYP19A1) of Equus caballus (Horse).